The sequence spans 289 residues: Probable acetolactate synthase small subunit (289 aa).

Residue Ser-34 is modified to Phosphoserine. In terms of domain architecture, ACT spans 72 to 149 (VFNCLVQNEP…AVLDYTGTSM (78 aa)).

It belongs to the acetolactate synthase small subunit family.

The protein localises to the cytoplasm. It functions in the pathway amino-acid biosynthesis; L-isoleucine biosynthesis; L-isoleucine from 2-oxobutanoate: step 1/4. Its pathway is amino-acid biosynthesis; L-valine biosynthesis; L-valine from pyruvate: step 1/4. Stimulates activity of the acetolactate synthase catalytic subunit ilv1. The polypeptide is Probable acetolactate synthase small subunit (Schizosaccharomyces pombe (strain 972 / ATCC 24843) (Fission yeast)).